The following is a 280-amino-acid chain: Bifunctional protein FolD (280 aa).

NADP(+)-binding positions include 166-168 (GRS) and Ser-191.

It belongs to the tetrahydrofolate dehydrogenase/cyclohydrolase family. In terms of assembly, homodimer.

It catalyses the reaction (6R)-5,10-methylene-5,6,7,8-tetrahydrofolate + NADP(+) = (6R)-5,10-methenyltetrahydrofolate + NADPH. The catalysed reaction is (6R)-5,10-methenyltetrahydrofolate + H2O = (6R)-10-formyltetrahydrofolate + H(+). It participates in one-carbon metabolism; tetrahydrofolate interconversion. In terms of biological role, catalyzes the oxidation of 5,10-methylenetetrahydrofolate to 5,10-methenyltetrahydrofolate and then the hydrolysis of 5,10-methenyltetrahydrofolate to 10-formyltetrahydrofolate. The chain is Bifunctional protein FolD from Teredinibacter turnerae (strain ATCC 39867 / T7901).